We begin with the raw amino-acid sequence, 444 residues long: Glutamate--tRNA ligase 1 (444 aa).

The 'HIGH' region motif lies at 10-20 (PSPTGRLHLGN). A 'KMSKS' region motif is present at residues 241 to 245 (GLSKR). K244 contacts ATP.

Belongs to the class-I aminoacyl-tRNA synthetase family. Glutamate--tRNA ligase type 1 subfamily. As to quaternary structure, monomer.

Its subcellular location is the cytoplasm. The catalysed reaction is tRNA(Glu) + L-glutamate + ATP = L-glutamyl-tRNA(Glu) + AMP + diphosphate. In terms of biological role, catalyzes the attachment of glutamate to tRNA(Glu) in a two-step reaction: glutamate is first activated by ATP to form Glu-AMP and then transferred to the acceptor end of tRNA(Glu). The sequence is that of Glutamate--tRNA ligase 1 from Rhodospirillum rubrum (strain ATCC 11170 / ATH 1.1.1 / DSM 467 / LMG 4362 / NCIMB 8255 / S1).